The sequence spans 197 residues: Rac-like GTP-binding protein ARAC11 (197 aa).

Glycine 13–threonine 20 lines the GTP pocket. The Effector region motif lies at tyrosine 35–phenylalanine 43. Residues aspartate 60–glutamine 64 and threonine 118–aspartate 121 each bind GTP. The residue at position 194 (cysteine 194) is a Cysteine methyl ester. The S-geranylgeranyl cysteine moiety is linked to residue cysteine 194. The propeptide at serine 195–leucine 197 is removed in mature form.

Belongs to the small GTPase superfamily. Rho family. In terms of assembly, part of a complex containing ROPGEF1 and PRK2. Interacts with UGT1, ICR1, ICR2, ICR3, ICR4 and ICR5. Interacts with PHIP1 when activated by GTP. Exclusively expressed in mature pollen and pollen tubes.

The protein resides in the cytoplasm. Its subcellular location is the membrane. The enzyme catalyses GTP + H2O = GDP + phosphate + H(+). In terms of biological role, may be involved in cell polarity control during the actin-dependent tip growth of pollen tubes. May regulate callose synthase 1 (CALS1) activity through the interaction with UGT1. Functionally, inactive GDP-bound Rho GTPases reside in the cytosol, are found in a complex with Rho GDP-dissociation inhibitors (Rho GDIs), and are released from the GDI protein in order to translocate to membranes upon activation. This is Rac-like GTP-binding protein ARAC11 from Arabidopsis thaliana (Mouse-ear cress).